The chain runs to 393 residues: Methylthioribose kinase (393 aa).

ATP-binding positions include asparagine 38, lysine 53, and glutamate 107–leucine 109. Aspartate 225 provides a ligand contact to substrate. An ATP-binding site is contributed by aspartate 242–glutamate 244. Arginine 332 is a substrate binding site.

It belongs to the methylthioribose kinase family. As to quaternary structure, homodimer.

It carries out the reaction 5-(methylsulfanyl)-D-ribose + ATP = 5-(methylsulfanyl)-alpha-D-ribose 1-phosphate + ADP + H(+). It participates in amino-acid biosynthesis; L-methionine biosynthesis via salvage pathway; S-methyl-5-thio-alpha-D-ribose 1-phosphate from S-methyl-5'-thioadenosine (hydrolase route): step 2/2. Functionally, catalyzes the phosphorylation of methylthioribose into methylthioribose-1-phosphate. This is Methylthioribose kinase from Bacillus cereus (strain ATCC 10987 / NRS 248).